A 147-amino-acid polypeptide reads, in one-letter code: UPF0306 protein YpAngola_A4021 (147 aa).

This sequence belongs to the UPF0306 family.

This chain is UPF0306 protein YpAngola_A4021, found in Yersinia pestis bv. Antiqua (strain Angola).